The primary structure comprises 264 residues: ATP synthase subunit a (264 aa).

Transmembrane regions (helical) follow at residues 39-59 (LDTLIISVVLGALFILIFYIV), 97-117 (VAPLALTIFIWVFLMNFMDLV), 139-159 (TADPTLTFAMSITVFVLVIFY), 205-225 (LFGNLFAGELIFILIALLPWW), and 239-259 (LLVITVQAFIFMMLTVVYISL).

Belongs to the ATPase A chain family. F-type ATPases have 2 components, CF(1) - the catalytic core - and CF(0) - the membrane proton channel. CF(1) has five subunits: alpha(3), beta(3), gamma(1), delta(1), epsilon(1). CF(0) has three main subunits: a(1), b(2) and c(9-12). The alpha and beta chains form an alternating ring which encloses part of the gamma chain. CF(1) is attached to CF(0) by a central stalk formed by the gamma and epsilon chains, while a peripheral stalk is formed by the delta and b chains.

The protein localises to the cell inner membrane. In terms of biological role, key component of the proton channel; it plays a direct role in the translocation of protons across the membrane. This chain is ATP synthase subunit a, found in Coxiella burnetii (strain Dugway 5J108-111).